The sequence spans 137 residues: 5-hydroxyisourate hydrolase (137 aa).

The signal sequence occupies residues 1–23 (MLKRYLVLSVVTAAFSLPSLVYA). Positions 32, 70, and 134 each coordinate substrate.

Belongs to the transthyretin family. 5-hydroxyisourate hydrolase subfamily. In terms of assembly, homotetramer.

It localises to the periplasm. It catalyses the reaction 5-hydroxyisourate + H2O = 5-hydroxy-2-oxo-4-ureido-2,5-dihydro-1H-imidazole-5-carboxylate + H(+). Its function is as follows. Catalyzes the hydrolysis of 5-hydroxyisourate (HIU) to 2-oxo-4-hydroxy-4-carboxy-5-ureidoimidazoline (OHCU). This is 5-hydroxyisourate hydrolase (hiuH) from Escherichia coli O157:H7.